We begin with the raw amino-acid sequence, 610 residues long: DNA mismatch repair protein MutL (610 aa).

Belongs to the DNA mismatch repair MutL/HexB family.

In terms of biological role, this protein is involved in the repair of mismatches in DNA. It is required for dam-dependent methyl-directed DNA mismatch repair. May act as a 'molecular matchmaker', a protein that promotes the formation of a stable complex between two or more DNA-binding proteins in an ATP-dependent manner without itself being part of a final effector complex. This Rickettsia africae (strain ESF-5) protein is DNA mismatch repair protein MutL.